The primary structure comprises 39 residues: Photosystem I reaction center subunit IX (39 aa).

The chain crosses the membrane as a helical span at residues 7–27; it reads FLTTAPVAFILFSSFVFALFI.

Belongs to the PsaJ family.

The protein resides in the cellular thylakoid membrane. May help in the organization of the PsaE and PsaF subunits. The chain is Photosystem I reaction center subunit IX from Synechococcus sp. (strain JA-3-3Ab) (Cyanobacteria bacterium Yellowstone A-Prime).